The chain runs to 94 residues: Elongation factor 1-beta (94 aa).

Belongs to the EF-1-beta/EF-1-delta family.

Its function is as follows. Promotes the exchange of GDP for GTP in EF-1-alpha/GDP, thus allowing the regeneration of EF-1-alpha/GTP that could then be used to form the ternary complex EF-1-alpha/GTP/AAtRNA. This Ignicoccus hospitalis (strain KIN4/I / DSM 18386 / JCM 14125) protein is Elongation factor 1-beta.